The sequence spans 1342 residues: MVYSYSEKKRIRKDFGKRPQVLEIPYLLSIQLDSFKKFIDLDVDGQHGLEAAFRSVFPIKSYSGNAELQYVSYRLGEPVFDVKECQIRGVTFSAPLRVKLRLVLFDREAAPGTVKDIKEQEVYMGEIPLMTENGTFVINGTERVIVSQLHRSPGVFFDHDKGKTHSSGKVLYNARVIPYRGSWLDFEFDPKDNLYVRIDRRRKLPATIMLRALEIPTEEILGMFFEKNQVRIDGNRFMSDIVPDRLRGETAQFDILDSDGNVLVEAGRRISARHTRALEKAGIVELEVPAEYLVGRVFACDYVDQETGELVVAANDLLTLENVLALKEAGYTTFETLYINELDHGAYISDTLRIDSSTNRLEALVEIYRMMRPGEPPTKDAAETLFTNLFFSEDRYDLSSVGRMKFNRRLGRETSIGAGTLDKDDIVDVMKQLITIRDGKDDVDDIDHLGNRRIRSVGEMAENQFRVGLVRVERAVKERLSLGDLDAVMPQDLINAKPISAAVKEFFGSSQLSQFMDQNNPLSEVTDKRRISALGPGGLTRERAGFEVRDVHPTHYGRVCPIETPEGPNIGLINSLASFARTNDFGFLETPYRKIVDGVVTDEIDYLSAIEEGQFSIAQANVVLDETGRLADDLIPCRHRGETTLKESSEITYMDVSPQQIVSIAASIIPFLEHDDANRALMGANMQRQAVPTLIADKPLVGTGMEKTVAVDSGVTVVAKRGGRVDYVDASRIVIKVNEEETVAGEAGIDIYNLTKYTRSNQNTCINQRPTCNVGEPIVAGDVLADGPSTDLGELALGQNMRIAFMPWNGYNFEDSILISERVAMEDRFTTIHIQELSCVARDTKLGPEEISSDIPNVGESALGKLDESGVVYIGAEVKGGDILVGKVTPKGETQLTPEEKLLRAIFGEKASDVKDTSLRVPNSVRGTVIDVQVFTRDGVEKDKRALEIEGMQLRQVKKDLSDEFNILADGIFARAKNLLIKSGIEESRLESAQREKWFDLTLTDEDAQTELDQIAEQFVEIKADFDKKFEIKRRKITQGDDLQPGVLKIVKVYLAVKRQIQPGDKMAGRHGNKGVISTIKPVEDMPYDVNGTPVDIVLNPLGVPSRMNIGQILETHLGMAAHGIGVKIDRMLKEHEEMAKLRSFLKEVYGAGTTHQEVDLDNFSDDEITRLADNLRKGVPMATPVFDGATEAEIKHMLTLADLPESGQIALFDGRTGREFERPVTVGYMYMLKLNHLVDDKMHARSTGSYSLVTQQPLGGKAQFGGQRFGEMEVWALEAYGAAYTLQEMLTVKSDDVNGRTKMYKNIVDGDHRMEPGMPESFNVLLKEIRSLGINIELEEQ.

Belongs to the RNA polymerase beta chain family. The RNAP catalytic core consists of 2 alpha, 1 beta, 1 beta' and 1 omega subunit. When a sigma factor is associated with the core the holoenzyme is formed, which can initiate transcription.

The catalysed reaction is RNA(n) + a ribonucleoside 5'-triphosphate = RNA(n+1) + diphosphate. Functionally, DNA-dependent RNA polymerase catalyzes the transcription of DNA into RNA using the four ribonucleoside triphosphates as substrates. In Pseudoalteromonas atlantica (strain T6c / ATCC BAA-1087), this protein is DNA-directed RNA polymerase subunit beta.